A 156-amino-acid chain; its full sequence is Maintenance of carboxysome distribution protein B (156 aa).

The required for interaction with McdA:DNA complex stretch occupies residues 1-55 (MSNNALDRLINKQKPKVPPRNDVVSESVSNDIKTQGQQELNTSLPPSDTKATPEE). Residues 1–79 (MSNNALDRLI…QKPKLSPDTF (79 aa)) are disordered. Over residues 24-50 (VSESVSNDIKTQGQQELNTSLPPSDTK) the composition is skewed to polar residues. Residues 51–63 (ATPEEMPTSHESE) show a composition bias toward basic and acidic residues. Residues 122-156 (PEELAQVIQLAQERLSQRKAIADYKRAKTMQERFL) adopt a coiled-coil conformation.

As to quaternary structure, homodimerizes; may exist in higher order oligomers in solution. Forms a complex with McdA:DNA. Homohexamerizes, interacts with shell components of the carboxysome.

It localises to the carboxysome. McdA and McdB together mediate carboxysome (Cb) spacing, size, ultrastructure and probably inheritance in the cell, together they prevent Cb aggregation. McdA is an ATPase that forms dynamic gradients on the nucleoid in response to adapter protein McdB, which associates with carboxysomes. The interplay between McdA gradients on the nucleoid and McdB-bound carboxysomes result in the equal spacing of Cbs along the cell length. Stimulates the ATPase activity of McdA, causing McdA to be released from DNA. Undergoes liquid-liquid phase separation. In terms of biological role, incorrect positioning (aggregation) of carboxysomes results in reduced CO(2) fixation by encapsulated ribulose-1,5-bisphosphate carboxylase (RuBisCO, cbbL/cbbS), which leads to slower growth. The protein is Maintenance of carboxysome distribution protein B of Gloeothece citriformis (strain PCC 7424) (Cyanothece sp. (strain PCC 7424)).